The following is a 348-amino-acid chain: UDP-N-acetylglucosamine--N-acetylmuramyl-(pentapeptide) pyrophosphoryl-undecaprenol N-acetylglucosamine transferase (348 aa).

UDP-N-acetyl-alpha-D-glucosamine-binding positions include 11–13 (TGG), asparagine 120, arginine 161, serine 187, and glutamine 281.

It belongs to the glycosyltransferase 28 family. MurG subfamily.

The protein resides in the cell inner membrane. The enzyme catalyses di-trans,octa-cis-undecaprenyl diphospho-N-acetyl-alpha-D-muramoyl-L-alanyl-D-glutamyl-meso-2,6-diaminopimeloyl-D-alanyl-D-alanine + UDP-N-acetyl-alpha-D-glucosamine = di-trans,octa-cis-undecaprenyl diphospho-[N-acetyl-alpha-D-glucosaminyl-(1-&gt;4)]-N-acetyl-alpha-D-muramoyl-L-alanyl-D-glutamyl-meso-2,6-diaminopimeloyl-D-alanyl-D-alanine + UDP + H(+). It functions in the pathway cell wall biogenesis; peptidoglycan biosynthesis. Functionally, cell wall formation. Catalyzes the transfer of a GlcNAc subunit on undecaprenyl-pyrophosphoryl-MurNAc-pentapeptide (lipid intermediate I) to form undecaprenyl-pyrophosphoryl-MurNAc-(pentapeptide)GlcNAc (lipid intermediate II). This Crocosphaera subtropica (strain ATCC 51142 / BH68) (Cyanothece sp. (strain ATCC 51142)) protein is UDP-N-acetylglucosamine--N-acetylmuramyl-(pentapeptide) pyrophosphoryl-undecaprenol N-acetylglucosamine transferase.